The sequence spans 699 residues: Putative inactive kinesin-like protein KIN-7B (699 aa).

The region spanning 1–170 (MRAIQKKSLC…LLFGSCAKEV (170 aa)) is the Kinesin motor domain. Residues 179-247 (VMSDKALVKH…QSRLQDLLQS (69 aa)) are a coiled coil. Positions 249–345 (GDHDLNRQVQ…VNSRHSRPSG (97 aa)) are disordered. The span at 264-275 (RSPPSVGMPPSV) shows a compositional bias: low complexity. Basic and acidic residues predominate over residues 276-298 (SRDDSSQVSHDDSDLYKEVRCIE). Residues 313-338 (GESSSPQDSNMNSGLHGNDSNASVNS) show a composition bias toward polar residues.

The protein belongs to the TRAFAC class myosin-kinesin ATPase superfamily. Kinesin family. KIN-7 subfamily.

This Oryza sativa subsp. japonica (Rice) protein is Putative inactive kinesin-like protein KIN-7B.